The chain runs to 234 residues: Orotidine 5'-phosphate decarboxylase (234 aa).

Residues aspartate 14, lysine 36, 63–72 (DMKLLDIDNT), threonine 118, arginine 179, glutamine 188, glycine 208, and arginine 209 contribute to the substrate site. The active-site Proton donor is lysine 65.

Belongs to the OMP decarboxylase family. Type 1 subfamily. Homodimer.

It catalyses the reaction orotidine 5'-phosphate + H(+) = UMP + CO2. The protein operates within pyrimidine metabolism; UMP biosynthesis via de novo pathway; UMP from orotate: step 2/2. Functionally, catalyzes the decarboxylation of orotidine 5'-monophosphate (OMP) to uridine 5'-monophosphate (UMP). The polypeptide is Orotidine 5'-phosphate decarboxylase (Rhizobium meliloti (strain 1021) (Ensifer meliloti)).